Here is a 291-residue protein sequence, read N- to C-terminus: N-acetylmannosamine kinase (291 aa).

Residues 5–12 and 132–139 contribute to the ATP site; these read AIDIGGTK and GVGGGVVS. Residues His-156, Cys-166, Cys-168, and Cys-173 each contribute to the Zn(2+) site.

It belongs to the ROK (NagC/XylR) family. NanK subfamily. As to quaternary structure, homodimer.

It catalyses the reaction an N-acyl-D-mannosamine + ATP = an N-acyl-D-mannosamine 6-phosphate + ADP + H(+). Its pathway is amino-sugar metabolism; N-acetylneuraminate degradation; D-fructose 6-phosphate from N-acetylneuraminate: step 2/5. Its function is as follows. Catalyzes the phosphorylation of N-acetylmannosamine (ManNAc) to ManNAc-6-P. The polypeptide is N-acetylmannosamine kinase (Escherichia coli O157:H7).